Here is a 434-residue protein sequence, read N- to C-terminus: ATP-dependent protease ATPase subunit HslU (434 aa).

ATP-binding positions include Ile18, 60–65 (GVGKTE), Asp247, Glu312, and Arg384.

Belongs to the ClpX chaperone family. HslU subfamily. In terms of assembly, a double ring-shaped homohexamer of HslV is capped on each side by a ring-shaped HslU homohexamer. The assembly of the HslU/HslV complex is dependent on binding of ATP.

Its subcellular location is the cytoplasm. Functionally, ATPase subunit of a proteasome-like degradation complex; this subunit has chaperone activity. The binding of ATP and its subsequent hydrolysis by HslU are essential for unfolding of protein substrates subsequently hydrolyzed by HslV. HslU recognizes the N-terminal part of its protein substrates and unfolds these before they are guided to HslV for hydrolysis. The sequence is that of ATP-dependent protease ATPase subunit HslU from Sinorhizobium fredii (strain NBRC 101917 / NGR234).